The sequence spans 388 residues: Acyl-CoA dehydrogenase fadE12 (388 aa).

It belongs to the acyl-CoA dehydrogenase family. FAD serves as cofactor.

The catalysed reaction is a 2,3-saturated acyl-CoA + A = a 2,3-dehydroacyl-CoA + AH2. The polypeptide is Acyl-CoA dehydrogenase fadE12 (fadE12) (Mycobacterium bovis (strain ATCC BAA-935 / AF2122/97)).